A 188-amino-acid polypeptide reads, in one-letter code: PRA1 family protein 3 (188 aa).

The residue at position 1 (M1) is an N-acetylmethionine. Residues M1 to R35 are Cytoplasmic-facing. The next 2 helical transmembrane spans lie at V36–S56 and V57–F77. Topologically, residues T78 to R92 are cytoplasmic. 2 consecutive transmembrane segments (helical) span residues M93–I113 and M115–I135. The tract at residues M103–G117 is required for homodimer formation and heterodimer formation with ARL6IP1. The Cytoplasmic portion of the chain corresponds to H136–E188. Residues H136–E188 are targeting to endoplasmic reticulum membrane.

This sequence belongs to the PRA1 family. As to quaternary structure, homodimer. Heterodimer with ARL6IP1. Forms multimers. Interacts with ARL6. Interacts with prenylated RAB1A and RAB3A. Interacts with SLC1A1/EAAC1. Interacts with RTN2 (via first transmembrane domain). Does not interact with VAMP1, VAMP2 or VAMP3. As to expression, ubiquitous. Most abundant in heart and brain. In the embryonic brain cortex, expressed in neurons and astrocytes.

Its subcellular location is the endoplasmic reticulum membrane. It is found in the cell membrane. The protein localises to the cytoplasm. The protein resides in the cytoskeleton. Functionally, regulates intracellular concentrations of taurine and glutamate. Negatively modulates SLC1A1/EAAC1 glutamate transport activity by decreasing its affinity for glutamate in a PKC activity-dependent manner. Plays a role in the retention of SLC1A1/EAAC1 in the endoplasmic reticulum. The chain is PRA1 family protein 3 (Arl6ip5) from Rattus norvegicus (Rat).